The primary structure comprises 269 residues: Tryptophan synthase alpha chain (269 aa).

Catalysis depends on proton acceptor residues glutamate 49 and aspartate 60.

It belongs to the TrpA family. Tetramer of two alpha and two beta chains.

The enzyme catalyses (1S,2R)-1-C-(indol-3-yl)glycerol 3-phosphate + L-serine = D-glyceraldehyde 3-phosphate + L-tryptophan + H2O. It participates in amino-acid biosynthesis; L-tryptophan biosynthesis; L-tryptophan from chorismate: step 5/5. The alpha subunit is responsible for the aldol cleavage of indoleglycerol phosphate to indole and glyceraldehyde 3-phosphate. The sequence is that of Tryptophan synthase alpha chain from Actinobacillus pleuropneumoniae serotype 5b (strain L20).